The primary structure comprises 497 residues: Probable cytosol aminopeptidase (497 aa).

Residues Lys267 and Asp272 each coordinate Mn(2+). Residue Lys279 is part of the active site. Mn(2+) is bound by residues Asp290, Asp349, and Glu351. Arg353 is an active-site residue.

This sequence belongs to the peptidase M17 family. It depends on Mn(2+) as a cofactor.

The protein resides in the cytoplasm. It catalyses the reaction Release of an N-terminal amino acid, Xaa-|-Yaa-, in which Xaa is preferably Leu, but may be other amino acids including Pro although not Arg or Lys, and Yaa may be Pro. Amino acid amides and methyl esters are also readily hydrolyzed, but rates on arylamides are exceedingly low.. The catalysed reaction is Release of an N-terminal amino acid, preferentially leucine, but not glutamic or aspartic acids.. Functionally, presumably involved in the processing and regular turnover of intracellular proteins. Catalyzes the removal of unsubstituted N-terminal amino acids from various peptides. The sequence is that of Probable cytosol aminopeptidase from Pseudomonas putida (strain ATCC 47054 / DSM 6125 / CFBP 8728 / NCIMB 11950 / KT2440).